We begin with the raw amino-acid sequence, 486 residues long: MLNASLRQLSSLLSEKKISSTELTGEFLARIKALNPDLNAFITMDEEKSLDQARTADEMIATGQSTLLTGIPIAQKDIFCANGWLTTCGSKMLSNFISPYDATVVKQFDQVGMVNLGKTNMDEFAMGSSNETSYYGPVKNPWDRLAVPGGSSGGSACAVAARLAPAATGTDTGGSIRQPAALCGISGIKPTYGLVSRYGMIAFASSLDQAGPMARSAEDLALLLNVMVGFDERDSTSLQREKEDYTQDLEKPVSGLRIGLPKEFFAEGMSSDVSSAVEAALAEYRKLGATFVEVSLPNSKLAVPVYYVLAPAEASSNLSRFDGVRYGHRAAQYANLEDLYAKTRAEGFGDEVKRRILIGTYVLSHGYYDAYYLQAQKLRRLIAEDFKKAFEQCDLIMGPTSPTVAFNIGERCNDPIQMYLSDIYTSAASLAGLPGMSIPVGFGSKNRPVGLHIIGNYFREAQMLNAAHRYQLATNWHELTPPEMNR.

Active-site charge relay system residues include K76 and S151. Catalysis depends on S175, which acts as the Acyl-ester intermediate.

Belongs to the amidase family. GatA subfamily. In terms of assembly, heterotrimer of A, B and C subunits.

The catalysed reaction is L-glutamyl-tRNA(Gln) + L-glutamine + ATP + H2O = L-glutaminyl-tRNA(Gln) + L-glutamate + ADP + phosphate + H(+). In terms of biological role, allows the formation of correctly charged Gln-tRNA(Gln) through the transamidation of misacylated Glu-tRNA(Gln) in organisms which lack glutaminyl-tRNA synthetase. The reaction takes place in the presence of glutamine and ATP through an activated gamma-phospho-Glu-tRNA(Gln). The sequence is that of Glutamyl-tRNA(Gln) amidotransferase subunit A from Nitrosomonas eutropha (strain DSM 101675 / C91 / Nm57).